The sequence spans 837 residues: Leucine-zipper-like transcriptional regulator 1 (837 aa).

Ala2 bears the N-acetylalanine mark. Kelch repeat units lie at residues 76–125 (AIYV…VYGS), 127–182 (MFVF…VYSD), 184–235 (LWIF…VCRD), 236–282 (KMFV…QRRY), 292–338 (HLYV…PERA), and 396–447 (AMYI…FVLG). The disordered stretch occupies residues 324-352 (SSDSEVGGAEMPERASSSEDASTLTSEER). 2 BTB domains span residues 440–534 (CDVE…KYPR) and 664–733 (CDIT…NMPP).

This sequence belongs to the LZTR1 family. Homodimer. Component of the BCR(LZTR1) E3 ubiquitin ligase complex, at least composed of CUL3, LZTR1 and RBX1. Interacts with Ras (K-Ras/KRAS, N-Ras/NRAS and H-Ras/HRAS). Interacts with RAF1. Interacts with SHOC2. Interacts with PPP1CB. Post-translationally, phosphorylated on tyrosine upon induction of apoptosis, leading to its degradation by the proteasome. In terms of tissue distribution, widely expressed.

It is found in the endomembrane system. The protein resides in the recycling endosome. It localises to the golgi apparatus. The protein operates within protein modification; protein ubiquitination. Substrate-specific adapter of a BCR (BTB-CUL3-RBX1) E3 ubiquitin-protein ligase complex that mediates ubiquitination of Ras (K-Ras/KRAS, N-Ras/NRAS and H-Ras/HRAS). Is a negative regulator of RAS-MAPK signaling that acts by controlling Ras levels and decreasing Ras association with membranes. The chain is Leucine-zipper-like transcriptional regulator 1 from Mus musculus (Mouse).